Reading from the N-terminus, the 103-residue chain is Large ribosomal subunit protein bL21 (103 aa).

This sequence belongs to the bacterial ribosomal protein bL21 family. As to quaternary structure, part of the 50S ribosomal subunit. Contacts protein L20.

In terms of biological role, this protein binds to 23S rRNA in the presence of protein L20. The sequence is that of Large ribosomal subunit protein bL21 from Cupriavidus metallidurans (strain ATCC 43123 / DSM 2839 / NBRC 102507 / CH34) (Ralstonia metallidurans).